The sequence spans 245 residues: Phycoerythrobilin:ferredoxin oxidoreductase (245 aa).

This sequence belongs to the HY2 family.

The enzyme catalyses (3Z)-phycoerythrobilin + oxidized 2[4Fe-4S]-[ferredoxin] = 15,16-dihydrobiliverdin + reduced 2[4Fe-4S]-[ferredoxin] + 2 H(+). Catalyzes the two-electron reduction of the C2 and C3(1) diene system of 15,16-dihydrobiliverdin. The protein is Phycoerythrobilin:ferredoxin oxidoreductase (pebB) of Gloeobacter violaceus (strain ATCC 29082 / PCC 7421).